Reading from the N-terminus, the 98-residue chain is C-X-C motif chemokine 10 (98 aa).

A signal peptide spans methionine 1–glycine 21. The residue at position 26 (arginine 26) is a Citrulline. 2 cysteine pairs are disulfide-bonded: cysteine 30–cysteine 57 and cysteine 32–cysteine 74.

The protein belongs to the intercrine alpha (chemokine CxC) family. In terms of assembly, monomer, dimer, and tetramer. Interacts with CXCR3 (via N-terminus). Expressed in the spleen, thymus, lymph nodes and liver. Expressed in astrocytes, microglia, and neurons.

Its subcellular location is the secreted. Its function is as follows. Pro-inflammatory cytokine that is involved in a wide variety of processes such as chemotaxis, differentiation, and activation of peripheral immune cells, regulation of cell growth, apoptosis and modulation of angiostatic effects. Plays thereby an important role during viral infections by stimulating the activation and migration of immune cells to the infected sites. Mechanistically, binding of CXCL10 to the CXCR3 receptor activates G protein-mediated signaling and results in downstream activation of phospholipase C-dependent pathway, an increase in intracellular calcium production and actin reorganization. In turn, recruitment of activated Th1 lymphocytes occurs at sites of inflammation. Activation of the CXCL10/CXCR3 axis also plays an important role in neurons in response to brain injury for activating microglia, the resident macrophage population of the central nervous system, and directing them to the lesion site. This recruitment is an essential element for neuronal reorganization. The sequence is that of C-X-C motif chemokine 10 (Cxcl10) from Mus musculus (Mouse).